Consider the following 117-residue polypeptide: Mini-circle uncharacterized 12.9 kDa protein (117 aa).

The chain is Mini-circle uncharacterized 12.9 kDa protein from Streptomyces coelicolor (strain ATCC BAA-471 / A3(2) / M145).